Here is a 383-residue protein sequence, read N- to C-terminus: Trichodiene synthase (383 aa).

Belongs to the trichodiene synthase family.

The enzyme catalyses (2E,6E)-farnesyl diphosphate = trichodiene + diphosphate. It functions in the pathway sesquiterpene biosynthesis; trichothecene biosynthesis. Functionally, TS is a member of the terpene cyclase group of enzymes. It catalyzes the isomerization and cyclization of farnesyl pyro-phosphate to form trichodiene, the first cyclic intermediate in the biosynthetic pathway for trichothecenes. It serves to branch trichothecene biosynthesis from the isoprenoid pathway. The chain is Trichodiene synthase (TRI5) from Gibberella pulicaris.